We begin with the raw amino-acid sequence, 152 residues long: Xanthine-guanine phosphoribosyltransferase (152 aa).

5-phospho-alpha-D-ribose 1-diphosphate contacts are provided by residues 37–38, Arg-69, and 88–96; these read RG and DDLVDTGGT. A GMP-binding site is contributed by Arg-69. Asp-89 serves as a coordination point for Mg(2+). Guanine contacts are provided by Asp-92 and Ile-135. 2 residues coordinate xanthine: Asp-92 and Ile-135. GMP is bound by residues 92–96 and 134–135; these read DTGGT and WI.

This sequence belongs to the purine/pyrimidine phosphoribosyltransferase family. XGPT subfamily. Homotetramer. Requires Mg(2+) as cofactor.

The protein resides in the cell inner membrane. It catalyses the reaction GMP + diphosphate = guanine + 5-phospho-alpha-D-ribose 1-diphosphate. The catalysed reaction is XMP + diphosphate = xanthine + 5-phospho-alpha-D-ribose 1-diphosphate. It carries out the reaction IMP + diphosphate = hypoxanthine + 5-phospho-alpha-D-ribose 1-diphosphate. The protein operates within purine metabolism; GMP biosynthesis via salvage pathway; GMP from guanine: step 1/1. Its pathway is purine metabolism; XMP biosynthesis via salvage pathway; XMP from xanthine: step 1/1. Its function is as follows. Purine salvage pathway enzyme that catalyzes the transfer of the ribosyl-5-phosphate group from 5-phospho-alpha-D-ribose 1-diphosphate (PRPP) to the N9 position of the 6-oxopurines guanine and xanthine to form the corresponding ribonucleotides GMP (guanosine 5'-monophosphate) and XMP (xanthosine 5'-monophosphate), with the release of PPi. To a lesser extent, also acts on hypoxanthine. This chain is Xanthine-guanine phosphoribosyltransferase, found in Escherichia fergusonii (strain ATCC 35469 / DSM 13698 / CCUG 18766 / IAM 14443 / JCM 21226 / LMG 7866 / NBRC 102419 / NCTC 12128 / CDC 0568-73).